The chain runs to 380 residues: Gap junction gamma-1 protein (380 aa).

Over 1–22 (MSWSFLTRLLDEISNHSTFVGK) the chain is Cytoplasmic. Residues 23–45 (IWLTLFIIFRIVLTVVGGESIYY) traverse the membrane as a helical segment. The Extracellular portion of the chain corresponds to 46–75 (DEQSKFVCNTQQPGCENVCYDAFAPLSHVR). A helical membrane pass occupies residues 76 to 95 (FWVFQIILITTPTIMYLGFA). Residues 96–171 (MHKIARSNDV…RRIKRDGLMK (76 aa)) are Cytoplasmic-facing. The helical transmembrane segment at 172–194 (VYILQLLSRIIFEVGFLFGQYIL) threads the bilayer. The Extracellular portion of the chain corresponds to 195-228 (YGFEVAPSYVCTRSPCPHTVDCFVSRPTEKTIFL). A helical membrane pass occupies residues 229-251 (LIMYAVSCLCLSLTVLEILHLGL). At 252 to 380 (SGIRDAFRRR…GSKCEKGIHA (129 aa)) the chain is on the cytoplasmic side. The tract at residues 337 to 380 (AYQNGESSPSRSSSPESNGTAVEQNRLNFAQEKQGSKCEKGIHA) is disordered. Low complexity predominate over residues 342–353 (ESSPSRSSSPES). Positions 354-369 (NGTAVEQNRLNFAQEK) are enriched in polar residues. A compositionally biased stretch (basic and acidic residues) spans 370–380 (QGSKCEKGIHA).

This sequence belongs to the connexin family. Gamma-type subfamily. As to quaternary structure, a connexon is composed of a hexamer of connexins.

It is found in the cell membrane. The protein resides in the cell junction. It localises to the gap junction. Functionally, one gap junction consists of a cluster of closely packed pairs of transmembrane channels, the connexons, through which materials of low MW diffuse from one cell to a neighboring cell. Participates in a developmental pathway for formation of the notochord and tail. In Danio rerio (Zebrafish), this protein is Gap junction gamma-1 protein (gjc1).